A 249-amino-acid chain; its full sequence is tRNA (guanine-N(7)-)-methyltransferase (249 aa).

The segment at 1 to 24 (MHSIPADTGHTPSRAPAGNGSPPA) is disordered. S-adenosyl-L-methionine-binding residues include Glu-81, Glu-106, Asp-133, and Asp-156. Asp-156 is an active-site residue. Residue Lys-160 participates in substrate binding. The interaction with RNA stretch occupies residues 162 to 167 (RHNKRR). Residues Asp-192 and 227 to 230 (TKFE) each bind substrate.

It belongs to the class I-like SAM-binding methyltransferase superfamily. TrmB family.

It carries out the reaction guanosine(46) in tRNA + S-adenosyl-L-methionine = N(7)-methylguanosine(46) in tRNA + S-adenosyl-L-homocysteine. The protein operates within tRNA modification; N(7)-methylguanine-tRNA biosynthesis. In terms of biological role, catalyzes the formation of N(7)-methylguanine at position 46 (m7G46) in tRNA. The polypeptide is tRNA (guanine-N(7)-)-methyltransferase (Paracidovorax citrulli (strain AAC00-1) (Acidovorax citrulli)).